We begin with the raw amino-acid sequence, 103 residues long: uncharacterized protein (103 aa).

Polar residues-rich tracts occupy residues 1 to 10 and 18 to 28; these read MSNSCSTSSY and TRSGSNVNRNY. Positions 1 to 28 are disordered; that stretch reads MSNSCSTSSYPIRRKTPTRSGSNVNRNY.

This is an uncharacterized protein from Acanthamoeba polyphaga mimivirus (APMV).